Here is a 955-residue protein sequence, read N- to C-terminus: Glycine dehydrogenase (decarboxylating) (955 aa).

N6-(pyridoxal phosphate)lysine is present on K705.

This sequence belongs to the GcvP family. As to quaternary structure, the glycine cleavage system is composed of four proteins: P, T, L and H. Pyridoxal 5'-phosphate is required as a cofactor.

The catalysed reaction is N(6)-[(R)-lipoyl]-L-lysyl-[glycine-cleavage complex H protein] + glycine + H(+) = N(6)-[(R)-S(8)-aminomethyldihydrolipoyl]-L-lysyl-[glycine-cleavage complex H protein] + CO2. The glycine cleavage system catalyzes the degradation of glycine. The P protein binds the alpha-amino group of glycine through its pyridoxal phosphate cofactor; CO(2) is released and the remaining methylamine moiety is then transferred to the lipoamide cofactor of the H protein. In Aliivibrio fischeri (strain MJ11) (Vibrio fischeri), this protein is Glycine dehydrogenase (decarboxylating).